The following is a 383-amino-acid chain: Odorant receptor 94b (383 aa).

Residues 1–41 (MESTNRLSAIQTLLVIQRWIGLLKWENEGEDGVLTWLKRIY) lie on the Cytoplasmic side of the membrane. The helical transmembrane segment at 42–62 (PFVLHLPLTFTYIALMWYEAI) threads the bilayer. The Extracellular segment spans residues 63-70 (TSSDFEEA). The chain crosses the membrane as a helical span at residues 71–91 (GQVLYMSITELALVTKLLNIW). Topologically, residues 92-130 (YRRHEAASLIHELQHDPAFNLRNSEEIKFWQQNQRNFKR) are cytoplasmic. Residues 131–151 (IFYWYIWGSLFVAVMGYISVF) form a helical membrane-spanning segment. Topologically, residues 152-174 (FQEDYELPFGYYVPFEWRTRERY) are extracellular. The chain crosses the membrane as a helical span at residues 175–195 (FYAWGYNVVAMTLCCLSNILL). At 196–250 (DTLGCYFMFHIASLFRLLGMRLEALKNAAEEKARPELRRIFQLHTKVRRLTRECE) the chain is on the cytoplasmic side. Residues 251 to 271 (VLVSPYVLSQVVFSAFIICFS) form a helical membrane-spanning segment. Over 272-284 (AYRLVHMGFKQRP) the chain is Extracellular. A helical membrane pass occupies residues 285-305 (GLFVTTVQFVAVMIVQIFLPC). Residues 306 to 358 (YYGNELTFHANALTNSVFGTNWLEYSVGTRKLLNCYMEFLKRPVKVRAGVFFE) lie on the Cytoplasmic side of the membrane. The helical transmembrane segment at 359–379 (IGLPIFVKTINNAYSFFALLL) threads the bilayer. The Extracellular portion of the chain corresponds to 380 to 383 (KISK).

Belongs to the insect chemoreceptor superfamily. Heteromeric odorant receptor channel (TC 1.A.69) family. Or2a subfamily. In terms of assembly, interacts with Orco. Complexes exist early in the endomembrane system in olfactory sensory neurons (OSNs), coupling these complexes to the conserved ciliary trafficking pathway.

It is found in the cell membrane. In terms of biological role, odorant receptor which mediates acceptance or avoidance behavior, depending on its substrates. The odorant receptor repertoire encodes a large collection of odor stimuli that vary widely in identity, intensity, and duration. May form a complex with Orco to form odorant-sensing units, providing sensitive and prolonged odorant signaling and calcium permeability. The sequence is that of Odorant receptor 94b (Or94b) from Drosophila melanogaster (Fruit fly).